The sequence spans 31 residues: Sarcolipin (31 aa).

Residues 1–7 (MERSTRE) lie on the Cytoplasmic side of the membrane. The helical transmembrane segment at 8-26 (LCLNFTVVLITVILIWLLV) threads the bilayer. At 27–31 (RSYQY) the chain is on the lumenal side.

Belongs to the sarcolipin family. In terms of assembly, homooligomer. Can also form heterooligomers with other sarcoplasmic/endoplasmic reticulum calcium ATPase (SERCA) regulators ARLN, ERLN, PLN and STRIT1/DWORF. Monomer. Interacts with calcium ATPase ATP2A1/SERCA1. Interacts as a monomer with ATP2A2/SERCA2; the interaction decreases ATP2A2 Ca(2+) affinity. Interacts with VMP1; VMP1 competes with PLN and SLN to prevent them from forming an inhibitory complex with ATP2A2. Skeletal muscle (at protein level).

The protein resides in the sarcoplasmic reticulum membrane. It is found in the endoplasmic reticulum membrane. Functionally, reversibly inhibits the activity of ATP2A1/SERCA1 and ATP2A2/SERCA2 in sarcoplasmic reticulum by decreasing the apparent affinity of the ATPase for Ca(2+). Also inhibits the activity of ATP2A3/SERCA3. Modulates calcium re-uptake during muscle relaxation and plays an important role in calcium homeostasis in muscle. Required for muscle-based, non-shivering thermogenesis. The sequence is that of Sarcolipin (SLN) from Oryctolagus cuniculus (Rabbit).